The chain runs to 580 residues: Formate--tetrahydrofolate ligase (580 aa).

83-90 provides a ligand contact to ATP; the sequence is TPMGEGKT.

This sequence belongs to the formate--tetrahydrofolate ligase family.

It carries out the reaction (6S)-5,6,7,8-tetrahydrofolate + formate + ATP = (6R)-10-formyltetrahydrofolate + ADP + phosphate. The protein operates within one-carbon metabolism; tetrahydrofolate interconversion. The protein is Formate--tetrahydrofolate ligase of Haloquadratum walsbyi (strain DSM 16790 / HBSQ001).